Here is a 137-residue protein sequence, read N- to C-terminus: Large ribosomal subunit protein uL16 (137 aa).

It belongs to the universal ribosomal protein uL16 family. Part of the 50S ribosomal subunit.

In terms of biological role, binds 23S rRNA and is also seen to make contacts with the A and possibly P site tRNAs. The polypeptide is Large ribosomal subunit protein uL16 (Endomicrobium trichonymphae).